We begin with the raw amino-acid sequence, 232 residues long: DASH complex subunit DUO1 (232 aa).

2 disordered regions span residues 1–44 (MADE…GGMR) and 133–232 (ERRR…RGAK). Residues 128 to 171 (ELEAEERRRQEEVERRAAEAERRREEARRKAEEEERRRAAAAAA) adopt a coiled-coil conformation. Over residues 133-165 (ERRRQEEVERRAAEAERRREEARRKAEEEERRR) the composition is skewed to basic and acidic residues. 2 stretches are compositionally biased toward low complexity: residues 167–183 (AAAAAAAAPAGRSVGRG) and 191–213 (GSGLTRGASSSASGSETTRTTSG).

Belongs to the DASH complex DUO1 family. In terms of assembly, component of the DASH complex consisting of ASK1, DAD1, DAD2, DAD3, DAD4, DAM1, DUO1, HSK3, SPC19 and SPC34, with a stoichiometry of one copy of each subunit per complex. Multiple DASH complexes oligomerize to form a ring that encircles spindle microtubules and organizes the rod-like NDC80 complexes of the outer kinetochore. DASH complex oligomerization strengthens microtubule attachments. On cytoplasmic microtubules, DASH complexes appear to form patches instead of rings.

Its subcellular location is the nucleus. It localises to the cytoplasm. The protein localises to the cytoskeleton. It is found in the spindle pole. The protein resides in the chromosome. Its subcellular location is the centromere. It localises to the kinetochore. Component of the DASH complex that connects microtubules with kinetochores and couples microtubule depolymerisation to chromosome movement; it is involved in retrieving kinetochores to the spindle poles before their re-orientation on the spindle in early mitosis and allows microtubule depolymerization to pull chromosomes apart and resist detachment during anaphase. Kinetochores, consisting of a centromere-associated inner segment and a microtubule-contacting outer segment, play a crucial role in chromosome segregation by mediating the physical connection between centromeric DNA and microtubules. Kinetochores also serve as an input point for the spindle assembly checkpoint, which delays anaphase until all chromosomes have bioriented on the mitotic spindle. The polypeptide is DASH complex subunit DUO1 (Chaetomium thermophilum (strain DSM 1495 / CBS 144.50 / IMI 039719) (Thermochaetoides thermophila)).